Consider the following 360-residue polypeptide: Lipid-A-disaccharide synthase (360 aa).

The protein belongs to the LpxB family.

It catalyses the reaction a lipid X + a UDP-2-N,3-O-bis[(3R)-3-hydroxyacyl]-alpha-D-glucosamine = a lipid A disaccharide + UDP + H(+). It participates in bacterial outer membrane biogenesis; LPS lipid A biosynthesis. Condensation of UDP-2,3-diacylglucosamine and 2,3-diacylglucosamine-1-phosphate to form lipid A disaccharide, a precursor of lipid A, a phosphorylated glycolipid that anchors the lipopolysaccharide to the outer membrane of the cell. This is Lipid-A-disaccharide synthase from Helicobacter pylori (strain HPAG1).